Consider the following 206-residue polypeptide: Protein GET1 (206 aa).

Residues M1–L4 lie on the Lumenal side of the membrane. The chain crosses the membrane as a helical span at residues L5–A24. At T25–R110 the chain is on the cytoplasmic side. The stretch at A75–S100 forms a coiled coil. Residues W111 to F131 traverse the membrane as a helical segment. Residues T132–T155 lie on the Lumenal side of the membrane. Residues V156–V172 traverse the membrane as a helical segment. The Cytoplasmic segment spans residues G173–Q206.

It belongs to the WRB/GET1 family. As to quaternary structure, interacts with GET3.

The protein localises to the endoplasmic reticulum membrane. Functionally, required for the post-translational delivery of tail-anchored (TA) proteins to the endoplasmic reticulum. Acts as a membrane receptor for soluble GET3, which recognizes and selectively binds the transmembrane domain of TA proteins in the cytosol. The protein is Protein GET1 of Ajellomyces capsulatus (strain H143) (Darling's disease fungus).